A 199-amino-acid chain; its full sequence is Chorismate pyruvate-lyase (199 aa).

The protein belongs to the chorismate pyruvate-lyase type 2 family.

It catalyses the reaction chorismate = 4-hydroxybenzoate + pyruvate. In terms of biological role, removes the pyruvyl group from chorismate to provide 4-hydroxybenzoate (4HB). Involved in the synthesis of glycosylated p-hydroxybenzoic acid methyl esters (p-HBADs) and phenolic glycolipids (PGL) that play important roles in the pathogenesis of mycobacterial infections. In Mycobacterium bovis (strain ATCC BAA-935 / AF2122/97), this protein is Chorismate pyruvate-lyase.